Consider the following 275-residue polypeptide: Nitrogenase iron protein 2 (275 aa).

9-16 lines the ATP pocket; that stretch reads GKGGIGKS. [4Fe-4S] cluster is bound at residue C97. ADP-ribosylarginine; by dinitrogenase reductase ADP-ribosyltransferase is present on R100. Residue C132 coordinates [4Fe-4S] cluster.

It belongs to the NifH/BchL/ChlL family. In terms of assembly, homodimer. Requires [4Fe-4S] cluster as cofactor. In terms of processing, the reversible ADP-ribosylation of Arg-100 inactivates the nitrogenase reductase and regulates nitrogenase activity.

It carries out the reaction N2 + 8 reduced [2Fe-2S]-[ferredoxin] + 16 ATP + 16 H2O = H2 + 8 oxidized [2Fe-2S]-[ferredoxin] + 2 NH4(+) + 16 ADP + 16 phosphate + 6 H(+). Functionally, the key enzymatic reactions in nitrogen fixation are catalyzed by the nitrogenase complex, which has 2 components: the iron protein (component 2) and a component 1 which is either a molybdenum-iron protein, a vanadium-iron, or an iron-iron protein. The polypeptide is Nitrogenase iron protein 2 (anfH) (Rhodobacter capsulatus (Rhodopseudomonas capsulata)).